A 347-amino-acid polypeptide reads, in one-letter code: Phosphate acyltransferase (347 aa).

The protein belongs to the PlsX family. Homodimer. Probably interacts with PlsY.

It is found in the cytoplasm. It catalyses the reaction a fatty acyl-[ACP] + phosphate = an acyl phosphate + holo-[ACP]. It participates in lipid metabolism; phospholipid metabolism. Catalyzes the reversible formation of acyl-phosphate (acyl-PO(4)) from acyl-[acyl-carrier-protein] (acyl-ACP). This enzyme utilizes acyl-ACP as fatty acyl donor, but not acyl-CoA. The protein is Phosphate acyltransferase of Sinorhizobium medicae (strain WSM419) (Ensifer medicae).